Here is a 669-residue protein sequence, read N- to C-terminus: Phosphatidylinositol-3-phosphate phosphatase MTMR1 (669 aa).

An N-acetylmethionine modification is found at Met1. Positions 1–17 (MDRPVAAAAAASAASCE) are enriched in low complexity. The interval 1-55 (MDRPVAAAAAASAASCEGAGGPGPGPGASWRPSRVAGGASASSRHPSIETLDSPT) is disordered. Phosphoserine is present on residues Ser47 and Ser53. Positions 94-165 (NKLAQMEEAP…GVISRVEKIG (72 aa)) constitute a GRAM domain. Positions 230–605 (GWKVYDPVSE…SHLELWVNYY (376 aa)) constitute a Myotubularin phosphatase domain. The a 1,2-diacyl-sn-glycero-3-phospho-(1D-myo-inositol-3-phosphate) site is built by Asn355, Asn380, and Ile381. Residue Cys442 is the Phosphocysteine intermediate of the active site. A 1,2-diacyl-sn-glycero-3-phospho-(1D-myo-inositol-3-phosphate) is bound by residues Ser443, Asp444, Gly445, Trp446, Asp447, Arg448, and Arg488. Residue Ser443 coordinates phosphate. Phosphate-binding residues include Gly445, Trp446, Asp447, and Arg448. The tract at residues 612–669 (MRPQMPIHQNLKELLAIKAELQKRVEDLQREMATRTISSSSERGSSPTHSATPVHTSV) is required for dimerization. The segment at 644–669 (ATRTISSSSERGSSPTHSATPVHTSV) is disordered. Over residues 649 to 661 (SSSSERGSSPTHS) the composition is skewed to low complexity.

This sequence belongs to the protein-tyrosine phosphatase family. Non-receptor class myotubularin subfamily. As to quaternary structure, homodimer. In terms of tissue distribution, widely expressed. Detected in skeletal muscle, heart, lung, liver and brain.

It localises to the cell membrane. Its subcellular location is the cytoplasm. The catalysed reaction is a 1,2-diacyl-sn-glycero-3-phospho-(1D-myo-inositol-3-phosphate) + H2O = a 1,2-diacyl-sn-glycero-3-phospho-(1D-myo-inositol) + phosphate. It catalyses the reaction 1,2-dioctanoyl-sn-glycero-3-phospho-(1-D-myo-inositol-3-phosphate) + H2O = 1,2-dioctanoyl-sn-glycero-3-phospho-(1D-myo-inositol) + phosphate. It carries out the reaction a 1,2-diacyl-sn-glycero-3-phospho-(1D-myo-inositol-3,5-bisphosphate) + H2O = a 1,2-diacyl-sn-glycero-3-phospho-(1D-myo-inositol-5-phosphate) + phosphate. In terms of biological role, lipid phosphatase that specifically dephosphorylates the D-3 position of phosphatidylinositol 3-phosphate, generating phosphatidylinositol. Could also dephosphorylate phosphatidylinositol 3,5-bisphosphate to produce phosphatidylinositol 5-phosphate. The protein is Phosphatidylinositol-3-phosphate phosphatase MTMR1 of Mus musculus (Mouse).